The primary structure comprises 86 residues: OMEGA-stichotoxin-Shd4a (86 aa).

The N-terminal stretch at 1–23 (MASFRTLFACVVILCCVLWSSMA) is a signal peptide. Residues 24-36 (RYGEDMEVETEMN) constitute a propeptide that is removed on maturation. The 43-residue stretch at 40–82 (EGVRCTGQHASSFCLNGGTCRHIASLGEYYCICPGDYTGHRCD) folds into the EGF-like domain. Cystine bridges form between Cys-44–Cys-59, Cys-53–Cys-70, and Cys-72–Cys-81.

This sequence belongs to the EGF domain peptide family.

The protein resides in the secreted. It localises to the nematocyst. Has both toxic and EGF activity. Its EGF activity consists of rounding cells (morphological change) and inducing tyrosine phosphorylation of the EGFR in A431 cells, but with a lower potency that human EGF. The sequence is that of OMEGA-stichotoxin-Shd4a from Stichodactyla haddoni (Saddle carpet anemone).